Consider the following 639-residue polypeptide: Threonine--tRNA ligase (639 aa).

In terms of domain architecture, TGS spans 1-61 (MATVRLPDGK…DGGGELEFVT (61 aa)). The interval 239 to 536 (DHRRLGRELG…LIEHYAGAFP (298 aa)) is catalytic. 3 residues coordinate Zn(2+): Cys333, His384, and His513.

This sequence belongs to the class-II aminoacyl-tRNA synthetase family. In terms of assembly, homodimer. Zn(2+) serves as cofactor.

The protein localises to the cytoplasm. It catalyses the reaction tRNA(Thr) + L-threonine + ATP = L-threonyl-tRNA(Thr) + AMP + diphosphate + H(+). Catalyzes the attachment of threonine to tRNA(Thr) in a two-step reaction: L-threonine is first activated by ATP to form Thr-AMP and then transferred to the acceptor end of tRNA(Thr). Also edits incorrectly charged L-seryl-tRNA(Thr). The chain is Threonine--tRNA ligase from Rubrobacter xylanophilus (strain DSM 9941 / JCM 11954 / NBRC 16129 / PRD-1).